The sequence spans 855 residues: Spindle and centriole-associated protein 1 (855 aa).

Positions 164-200 (QALNDVDGEEEGTVTSQSGESENENELDNSLNSQSNT) are disordered. T235 carries the post-translational modification Phosphothreonine. Residues 300 to 311 (KPNLHALSKPKK) show a composition bias toward basic residues. Positions 300-328 (KPNLHALSKPKKNMLSGSTTSADLPNRTN) are disordered. Over residues 314 to 328 (LSGSTTSADLPNRTN) the composition is skewed to polar residues. The stretch at 325 to 437 (NRTNSNLDVL…TQARLRQYMV (113 aa)) forms a coiled coil. 2 positions are modified to phosphoserine: S640 and S644. Residues 725–751 (GSMEERIAELNRQSMEARGKLLQLIEQ) adopt a coiled-coil conformation. Phosphoserine occurs at positions 760, 764, and 819. Residues 789–834 (EAPESSKCSTVSPVSEINTRRSSGATSNSCSPLNATSGSGRFTPLN) form a disordered region. Polar residues predominate over residues 794–828 (SKCSTVSPVSEINTRRSSGATSNSCSPLNATSGSG).

In terms of assembly, interacts with CEP120.

Its subcellular location is the cytoplasm. It is found in the cytoskeleton. The protein resides in the microtubule organizing center. It localises to the centrosome. The protein localises to the centriole. Its subcellular location is the spindle. Regulator required for centriole duplication, for proper bipolar spindle formation and chromosome congression in mitosis. In Pongo abelii (Sumatran orangutan), this protein is Spindle and centriole-associated protein 1 (SPICE1).